Reading from the N-terminus, the 593-residue chain is MPWAKEGDLQELLKAFPQASVVELQNSTSVIVPKDILIDVLKYLKEKLGYKLFLDHSVVDLKDLLENEKEFNKVVKQNLIAFPEDRESRFQAFYILYNVDERKRVIVKTRTNGKLPTIEKLWFAGKWAERECYDMFGIEYEGHENLVRAFMWDTYPYFPLRKDFPLEGIPEQELPSLNEVVFGDNLEGLMNYDRMHTRVPTLEDLEVTEKKRLKKKAQIVLNWGPLHPGTHGTMWFLFDLEGERIVQTDVILGQLHRGVEKLAEHEMYNQFLVYTDRMDYLSALCSNQAWVVAIERLMGIHDKVPPKAKYIRTMMSELQRINSHLLWLGTYALDLGALTIFLYAFKEREKIMDIIEGITGARLTISYPRIGGVRMDLPEGALEVIKAFIKKFPEELKDWETILTRNRIWLRRNKEVGIISKEDAYFHGVTGPVIRGSGIPYDIRKFEPYDAYDEVEFDIPVGEIGDCYDRYLVRIEEMKQSIRIIEQCVAKLEKMSKNEPFFYEGEGKKLKLSLDGIGVKAPVGEIYSSGENPRGELGFYVVSTGGTSPYRVKIRPPSYYNLCIYPHLMKDRYVADAVTILASIDPVVGETDR.

The segment at 1–193 (MPWAKEGDLQ…DNLEGLMNYD (193 aa)) is NADH dehydrogenase I subunit C. Residues 217–593 (AQIVLNWGPL…IDPVVGETDR (377 aa)) are NADH dehydrogenase I subunit D.

This sequence in the N-terminal section; belongs to the complex I 30 kDa subunit family. It in the C-terminal section; belongs to the complex I 49 kDa subunit family. NDH-1 is composed of 13 different subunits. Subunits NuoB, CD, E, F, and G constitute the peripheral sector of the complex.

The protein resides in the cell inner membrane. The enzyme catalyses a quinone + NADH + 5 H(+)(in) = a quinol + NAD(+) + 4 H(+)(out). Functionally, NDH-1 shuttles electrons from NADH, via FMN and iron-sulfur (Fe-S) centers, to quinones in the respiratory chain. The immediate electron acceptor for the enzyme in this species is believed to be ubiquinone. Couples the redox reaction to proton translocation (for every two electrons transferred, four hydrogen ions are translocated across the cytoplasmic membrane), and thus conserves the redox energy in a proton gradient. The chain is NADH-quinone oxidoreductase subunit C/D 1 (nuoC1) from Aquifex aeolicus (strain VF5).